We begin with the raw amino-acid sequence, 419 residues long: 3-isopropylmalate dehydratase large subunit (419 aa).

[4Fe-4S] cluster contacts are provided by cysteine 301, cysteine 361, and cysteine 364.

This sequence belongs to the aconitase/IPM isomerase family. LeuC type 2 subfamily. In terms of assembly, heterodimer of LeuC and LeuD. [4Fe-4S] cluster serves as cofactor.

It carries out the reaction (2R,3S)-3-isopropylmalate = (2S)-2-isopropylmalate. It participates in amino-acid biosynthesis; L-leucine biosynthesis; L-leucine from 3-methyl-2-oxobutanoate: step 2/4. Its function is as follows. Catalyzes the isomerization between 2-isopropylmalate and 3-isopropylmalate, via the formation of 2-isopropylmaleate. The sequence is that of 3-isopropylmalate dehydratase large subunit from Campylobacter hominis (strain ATCC BAA-381 / DSM 21671 / CCUG 45161 / LMG 19568 / NCTC 13146 / CH001A).